A 202-amino-acid polypeptide reads, in one-letter code: Adenylyl-sulfate kinase (202 aa).

35 to 42 contacts ATP; it reads GLSGSGKS. The active-site Phosphoserine intermediate is the Ser-109.

The protein belongs to the APS kinase family.

It catalyses the reaction adenosine 5'-phosphosulfate + ATP = 3'-phosphoadenylyl sulfate + ADP + H(+). The protein operates within sulfur metabolism; hydrogen sulfide biosynthesis; sulfite from sulfate: step 2/3. Functionally, catalyzes the synthesis of activated sulfate. The polypeptide is Adenylyl-sulfate kinase (Bacteroides fragilis (strain ATCC 25285 / DSM 2151 / CCUG 4856 / JCM 11019 / LMG 10263 / NCTC 9343 / Onslow / VPI 2553 / EN-2)).